Reading from the N-terminus, the 457-residue chain is Serine--tRNA ligase (457 aa).

252 to 254 provides a ligand contact to L-serine; that stretch reads TAE. Residues 283 to 285 and V299 contribute to the ATP site; that span reads RKE. An L-serine-binding site is contributed by E306. 370 to 373 provides a ligand contact to ATP; it reads EVVS. Residue T406 coordinates L-serine.

It belongs to the class-II aminoacyl-tRNA synthetase family. Type-1 seryl-tRNA synthetase subfamily. As to quaternary structure, homodimer. The tRNA molecule binds across the dimer.

It is found in the cytoplasm. The enzyme catalyses tRNA(Ser) + L-serine + ATP = L-seryl-tRNA(Ser) + AMP + diphosphate + H(+). It catalyses the reaction tRNA(Sec) + L-serine + ATP = L-seryl-tRNA(Sec) + AMP + diphosphate + H(+). Its pathway is aminoacyl-tRNA biosynthesis; selenocysteinyl-tRNA(Sec) biosynthesis; L-seryl-tRNA(Sec) from L-serine and tRNA(Sec): step 1/1. Its function is as follows. Catalyzes the attachment of serine to tRNA(Ser). Is also able to aminoacylate tRNA(Sec) with serine, to form the misacylated tRNA L-seryl-tRNA(Sec), which will be further converted into selenocysteinyl-tRNA(Sec). This chain is Serine--tRNA ligase, found in Thermococcus onnurineus (strain NA1).